A 403-amino-acid chain; its full sequence is Metacaspase-7 (403 aa).

Catalysis depends on residues His86 and Cys139. S-nitrosocysteine is present on Cys139.

This sequence belongs to the peptidase C14B family. In terms of processing, proteolytically processed; by an autocatalytic mechanism. In terms of tissue distribution, expressed in roots, flowers and siliques.

The chain is Metacaspase-7 (AMC7) from Arabidopsis thaliana (Mouse-ear cress).